The chain runs to 380 residues: Chorismate synthase (380 aa).

The NADP(+) site is built by Arg48 and Arg53. FMN is bound by residues 126–128, Gly284, 299–303, and Arg326; these read RAS and KPTSS.

The protein belongs to the chorismate synthase family. FMNH2 serves as cofactor.

The enzyme catalyses 5-O-(1-carboxyvinyl)-3-phosphoshikimate = chorismate + phosphate. Its pathway is metabolic intermediate biosynthesis; chorismate biosynthesis; chorismate from D-erythrose 4-phosphate and phosphoenolpyruvate: step 7/7. Functionally, catalyzes the anti-1,4-elimination of the C-3 phosphate and the C-6 proR hydrogen from 5-enolpyruvylshikimate-3-phosphate (EPSP) to yield chorismate, which is the branch point compound that serves as the starting substrate for the three terminal pathways of aromatic amino acid biosynthesis. This reaction introduces a second double bond into the aromatic ring system. The protein is Chorismate synthase of Ignicoccus hospitalis (strain KIN4/I / DSM 18386 / JCM 14125).